Consider the following 251-residue polypeptide: Large ribosomal subunit protein uL3 (251 aa).

Gln-151 bears the N5-methylglutamine mark. The segment at 219–251 (PGAFRRNGEEAAAAPAAEAPAETPAEEAGQEGA) is disordered. Over residues 228–241 (EAAAAPAAEAPAET) the composition is skewed to low complexity. Acidic residues predominate over residues 242–251 (PAEEAGQEGA).

The protein belongs to the universal ribosomal protein uL3 family. Part of the 50S ribosomal subunit. Forms a cluster with proteins L14 and L19. Post-translationally, methylated by PrmB.

One of the primary rRNA binding proteins, it binds directly near the 3'-end of the 23S rRNA, where it nucleates assembly of the 50S subunit. This is Large ribosomal subunit protein uL3 from Parvibaculum lavamentivorans (strain DS-1 / DSM 13023 / NCIMB 13966).